The chain runs to 465 residues: Glucose-1-phosphate adenylyltransferase (465 aa).

Alpha-D-glucose 1-phosphate-binding positions include Gly-164, 181–182, and Ser-199; that span reads EK.

This sequence belongs to the bacterial/plant glucose-1-phosphate adenylyltransferase family. Homotetramer.

It catalyses the reaction alpha-D-glucose 1-phosphate + ATP + H(+) = ADP-alpha-D-glucose + diphosphate. It participates in glycan biosynthesis; glycogen biosynthesis. Its function is as follows. Involved in the biosynthesis of ADP-glucose, a building block required for the elongation reactions to produce glycogen. Catalyzes the reaction between ATP and alpha-D-glucose 1-phosphate (G1P) to produce pyrophosphate and ADP-Glc. This Arthrobacter sp. (strain FB24) protein is Glucose-1-phosphate adenylyltransferase.